The following is a 337-amino-acid chain: Phosphate acyltransferase (337 aa).

This sequence belongs to the PlsX family. As to quaternary structure, homodimer. Probably interacts with PlsY.

Its subcellular location is the cytoplasm. It catalyses the reaction a fatty acyl-[ACP] + phosphate = an acyl phosphate + holo-[ACP]. Its pathway is lipid metabolism; phospholipid metabolism. Functionally, catalyzes the reversible formation of acyl-phosphate (acyl-PO(4)) from acyl-[acyl-carrier-protein] (acyl-ACP). This enzyme utilizes acyl-ACP as fatty acyl donor, but not acyl-CoA. In Aromatoleum aromaticum (strain DSM 19018 / LMG 30748 / EbN1) (Azoarcus sp. (strain EbN1)), this protein is Phosphate acyltransferase.